The following is a 262-amino-acid chain: Acyl-[acyl-carrier-protein]--UDP-N-acetylglucosamine O-acyltransferase (262 aa).

Belongs to the transferase hexapeptide repeat family. LpxA subfamily. Homotrimer.

The protein localises to the cytoplasm. The enzyme catalyses a (3R)-hydroxyacyl-[ACP] + UDP-N-acetyl-alpha-D-glucosamine = a UDP-3-O-[(3R)-3-hydroxyacyl]-N-acetyl-alpha-D-glucosamine + holo-[ACP]. It functions in the pathway glycolipid biosynthesis; lipid IV(A) biosynthesis; lipid IV(A) from (3R)-3-hydroxytetradecanoyl-[acyl-carrier-protein] and UDP-N-acetyl-alpha-D-glucosamine: step 1/6. Functionally, involved in the biosynthesis of lipid A, a phosphorylated glycolipid that anchors the lipopolysaccharide to the outer membrane of the cell. The chain is Acyl-[acyl-carrier-protein]--UDP-N-acetylglucosamine O-acyltransferase from Photorhabdus laumondii subsp. laumondii (strain DSM 15139 / CIP 105565 / TT01) (Photorhabdus luminescens subsp. laumondii).